We begin with the raw amino-acid sequence, 145 residues long: DnaJ homolog subfamily B member 3 (145 aa).

Residues methionine 1–glycine 69 form the J domain.

Expressed in sperm (at protein level).

May operate as a co-chaperone of the male germ cell- and haploid stage-specific Hsp70 proteins. The chain is DnaJ homolog subfamily B member 3 (DNAJB3) from Homo sapiens (Human).